A 1313-amino-acid chain; its full sequence is MRSAAAAPRSPAVATESRRFAAARWPGWRSLQRPARRSGRGGGGAAPGPYPSAAPPPPGPGPPPSRQSSPPSASDCFGSNGNGGGAFRPGSRRLLGLGGPPRPFVVLLLPLASPGAPPAAPTRASPLGARASPPRSGVSLARPAPGCPRPACEPVYGPLTMSLKPQQQQQQQQQQQQQQQQQQQQQQQPPPAAANVRKPGGSGLLASPAAAPSPSSSSVSSSSATAPSSVVAATSGGGRPGLGRGRNSNKGLPQSTISFDGIYANMRMVHILTSVVGSKCEVQVKNGGIYEGVFKTYSPKCDLVLDAAHEKSTESSSGPKREEIMESILFKCSDFVVVQFKDMDSSYAKRDAFTDSAISAKVNGEHKEKDLEPWDAGELTANEELEALENDVSNGWDPNDMFRYNEENYGVVSTYDSSLSSYTVPLERDNSEEFLKREARANQLAEEIESSAQYKARVALENDDRSEEEKYTAVQRNSSEREGHSINTRENKYIPPGQRNREVISWGSGRQNSPRMGQPGSGSMPSRSTSHTSDFNPNSGSDQRVVNGGVPWPSPCPSPSSRPPSRYQSGPNSLPPRAATPTRPPSRPPSRPSRPPSHPSAHGSPAPVSTMPKRMSSEGPPRMSPKAQRHPRNHRVSAGRGSISSGLEFVSHNPPSEAATPPVARTSPSGGTWSSVVSGVPRLSPKTHRPRSPRQNSIGNTPSGPVLASPQAGIIPTEAVAMPIPAASPTPASPASNRAVTPSSEAKDSRLQDQRQNSPAGNKENIKPNETSPSFSKAENKGISPVVSEHRKQIDDLKKFKNDFRLQPSSTSESMDQLLNKNREGEKSRDLIKDKIEPSAKDSFIENSSSNCTSGSSKPNSPSISPSILSNTEHKRGPEVTSQGVQTSSPACKQEKDDKEEKKDAAEQVRKSTLNPNAKEFNPRSFSQPKPSTTPTSPRPQAQPSPSMVGHQQPTPVYTQPVCFAPNMMYPVPVSPGVQPLYPIPMTPMPVNQAKTYRAVPNMPQQRQDQHHQSAMMHPASAAGPPIAATPPAYSTQYVAYSPQQFPNQPLVQHVPHYQSQHPHVYSPVIQGNARMMAPPTHAQPGLVSSSATQYGAHEQTHAMYACPKLPYNKETSPSFYFAISTGSLAQQYAHPNATLHPHTPHPQPSATPTGQQQSQHGGSHPAPSPVQHHQHQAAQALHLASPQQQSAIYHAGLAPTPPSMTPASNTQSPQNSFPAAQQTVFTIHPSHVQPAYTNPPHMAHVPQAHVQSGMVPSHPTAHAPMMLMTTQPPGGPQAALAQSALQPIPVSTTAHFPYMTHPSVQAHHQQQL.

Low complexity predominate over residues 1–12 (MRSAAAAPRSPA). The segment at 1–255 (MRSAAAAPRS…RNSNKGLPQS (255 aa)) is disordered. The span at 48 to 65 (GPYPSAAPPPPGPGPPPS) shows a compositional bias: pro residues. 4 stretches are compositionally biased toward low complexity: residues 104–114 (FVVLLLPLASP), 141–154 (ARPA…ACEP), 166–187 (QQQQ…QQQQ), and 204–234 (LLAS…VAAT). Residues 235 to 244 (SGGGRPGLGR) are compositionally biased toward gly residues. Serine 248 carries the post-translational modification Phosphoserine. One can recognise a Sm domain in the interval 267 to 344 (RMVHILTSVV…FVVVQFKDMD (78 aa)). 5 positions are modified to phosphoserine: serine 393, serine 466, serine 478, serine 508, and serine 554. Basic and acidic residues-rich tracts occupy residues 459 to 471 (ALEN…EEKY) and 478 to 492 (SSER…RENK). 2 disordered regions span residues 459-954 (ALEN…HQQP) and 1137-1219 (NATL…NSFP). A compositionally biased stretch (polar residues) spans 508 to 544 (SGRQNSPRMGQPGSGSMPSRSTSHTSDFNPNSGSDQR). Pro residues predominate over residues 552 to 562 (WPSPCPSPSSR). Low complexity predominate over residues 563 to 581 (PPSRYQSGPNSLPPRAATP). Positions 582-598 (TRPPSRPPSRPSRPPSH) are enriched in pro residues. Phosphoserine is present on serine 624. Over residues 627 to 637 (AQRHPRNHRVS) the composition is skewed to basic residues. An Asymmetric dimethylarginine; alternate modification is found at arginine 640. An Omega-N-methylarginine; alternate modification is found at arginine 640. Serine 642 is modified (phosphoserine). The segment covering 666-681 (TSPSGGTWSSVVSGVP) has biased composition (low complexity). Phosphoserine is present on serine 684. Residues 693-703 (PRQNSIGNTPS) are compositionally biased toward polar residues. At serine 728 the chain carries Phosphoserine. Threonine 741 is modified (phosphothreonine). Positions 768-777 (PNETSPSFSK) are enriched in polar residues. 2 positions are modified to phosphoserine: serine 772 and serine 784. Residues 788–804 (SEHRKQIDDLKKFKNDF) are compositionally biased toward basic and acidic residues. Polar residues predominate over residues 807–820 (QPSSTSESMDQLLN). Over residues 821-844 (KNREGEKSRDLIKDKIEPSAKDSF) the composition is skewed to basic and acidic residues. Positions 847–871 (NSSSNCTSGSSKPNSPSISPSILSN) are enriched in low complexity. Residues serine 856, serine 857, serine 861, serine 865, serine 867, serine 888, and serine 889 each carry the phosphoserine modification. A compositionally biased stretch (polar residues) spans 880 to 891 (VTSQGVQTSSPA). A Glycyl lysine isopeptide (Lys-Gly) (interchain with G-Cter in SUMO2) cross-link involves residue lysine 893. The segment covering 893 to 910 (KQEKDDKEEKKDAAEQVR) has biased composition (basic and acidic residues). Composition is skewed to low complexity over residues 925-936 (SFSQPKPSTTPT) and 1155-1192 (GQQQ…QQSA). The span at 1206-1219 (TPASNTQSPQNSFP) shows a compositional bias: polar residues.

Belongs to the ataxin-2 family. In terms of assembly, monomer. Can also form homodimers. Interacts with TARDBP; the interaction is RNA-dependent. Interacts with RBFOX1. Interacts with polyribosomes. Interacts with SH3GL2 and SH3GL3. Interacts with SH3KBP1 and CBL. Interacts with EGFR. Interacts with ATXN2L. As to expression, expressed in the brain, heart, liver, skeletal muscle, pancreas and placenta. Isoform 1 is predominant in the brain and spinal cord. Isoform 4 is more abundant in the cerebellum. In the brain, broadly expressed in the amygdala, caudate nucleus, corpus callosum, hippocampus, hypothalamus, substantia nigra, subthalamic nucleus and thalamus.

It is found in the cytoplasm. In terms of biological role, involved in EGFR trafficking, acting as negative regulator of endocytic EGFR internalization at the plasma membrane. The sequence is that of Ataxin-2 (ATXN2) from Homo sapiens (Human).